Reading from the N-terminus, the 258-residue chain is Isoprenyl transferase (258 aa).

The active site involves aspartate 38. Aspartate 38 contributes to the Mg(2+) binding site. Residues 39–42 (GNGR), tryptophan 43, arginine 51, histidine 55, and 83–85 (STE) each bind substrate. The Proton acceptor role is filled by asparagine 86. Substrate-binding positions include tryptophan 87, arginine 89, arginine 206, and 212 to 214 (RIS). A Mg(2+)-binding site is contributed by glutamate 225.

Belongs to the UPP synthase family. Homodimer. Requires Mg(2+) as cofactor.

In terms of biological role, catalyzes the condensation of isopentenyl diphosphate (IPP) with allylic pyrophosphates generating different type of terpenoids. This chain is Isoprenyl transferase, found in Bacillus anthracis.